Consider the following 61-residue polypeptide: Small ribosomal subunit protein uS14 (61 aa).

Positions 1–12 are enriched in acidic residues; that stretch reads MSESETTDEPDS. Positions 1–25 are disordered; it reads MSESETTDEPDSETASSERTGQLES. Positions 26, 29, 44, and 47 each coordinate Zn(2+).

Belongs to the universal ribosomal protein uS14 family. Zinc-binding uS14 subfamily. Part of the 30S ribosomal subunit. The cofactor is Zn(2+).

Functionally, binds 16S rRNA, required for the assembly of 30S particles. The polypeptide is Small ribosomal subunit protein uS14 (Haloarcula marismortui (strain ATCC 43049 / DSM 3752 / JCM 8966 / VKM B-1809) (Halobacterium marismortui)).